The primary structure comprises 158 residues: MARMHTRRRGSSGSDKPVADDPPEWSDIDADAIEERVVELAEQGHEPSQIGMKLRDEGVKGTPIPDVKLATDKKVTTILEEHNAKPELPEDLRNLMERAIRLRRHVDENGQDMQNKRALQNTESKIRRLASYYRGDELDEDFTYSFEVAVELLEAEEA.

Residues 1–10 (MARMHTRRRG) show a composition bias toward basic residues. The disordered stretch occupies residues 1–66 (MARMHTRRRG…EGVKGTPIPD (66 aa)). Acidic residues predominate over residues 21–32 (DPPEWSDIDADA). Basic and acidic residues predominate over residues 33 to 45 (IEERVVELAEQGH).

The protein belongs to the universal ribosomal protein uS15 family. As to quaternary structure, part of the 30S ribosomal subunit.

This is Small ribosomal subunit protein uS15 from Haloquadratum walsbyi (strain DSM 16790 / HBSQ001).